We begin with the raw amino-acid sequence, 94 residues long: Selenoprotein K (94 aa).

The helical transmembrane segment at 20–42 threads the bilayer; that stretch reads LSFLTDFFWGAVEFIGLFFQTLV. A disordered region spans residues 48-94; that stretch reads KDGNNSASSRFSDGRGPPGFPGRRRMGRINHGAGPTPPPMGGGGUGR. The segment covering 49-58 has biased composition (polar residues); that stretch reads DGNNSASSRF. A non-standard amino acid (selenocysteine) is located at residue U92.

This sequence belongs to the selenoprotein K family.

The protein resides in the endoplasmic reticulum membrane. Its subcellular location is the cell membrane. In terms of biological role, required for Ca(2+) flux in immune cells and plays a role in T-cell proliferation and in T-cell and neutrophil migration. Involved in endoplasmic reticulum-associated degradation (ERAD) of soluble glycosylated proteins. Required for cell surface expression of CD36 and involved in macrophage uptake of low-density lipoprotein and in foam cell formation. Required for palmitoylation. This is Selenoprotein K (selenok) from Danio rerio (Zebrafish).